The following is a 351-amino-acid chain: Ferredoxin--NADP reductase (351 aa).

FAD contacts are provided by Asp-44, Gln-52, Tyr-57, Val-97, Phe-132, Asp-296, and Ser-337.

Belongs to the ferredoxin--NADP reductase type 2 family. As to quaternary structure, homodimer. It depends on FAD as a cofactor.

It catalyses the reaction 2 reduced [2Fe-2S]-[ferredoxin] + NADP(+) + H(+) = 2 oxidized [2Fe-2S]-[ferredoxin] + NADPH. The chain is Ferredoxin--NADP reductase from Paraburkholderia phymatum (strain DSM 17167 / CIP 108236 / LMG 21445 / STM815) (Burkholderia phymatum).